The following is a 229-amino-acid chain: Orotidine 5'-phosphate decarboxylase (229 aa).

Residues aspartate 11, lysine 33, aspartate 60–threonine 69, threonine 119, arginine 180, glutamine 189, glycine 209, and arginine 210 contribute to the substrate site. The Proton donor role is filled by lysine 62.

Belongs to the OMP decarboxylase family. Type 1 subfamily. As to quaternary structure, homodimer.

The catalysed reaction is orotidine 5'-phosphate + H(+) = UMP + CO2. Its pathway is pyrimidine metabolism; UMP biosynthesis via de novo pathway; UMP from orotate: step 2/2. Functionally, catalyzes the decarboxylation of orotidine 5'-monophosphate (OMP) to uridine 5'-monophosphate (UMP). The protein is Orotidine 5'-phosphate decarboxylase of Dichelobacter nodosus (strain VCS1703A).